The primary structure comprises 271 residues: uncharacterized protein (271 aa).

The protein belongs to the anhydro-N-acetylmuramic acid kinase family.

This is an uncharacterized protein from Yersinia enterocolitica.